Here is a 705-residue protein sequence, read N- to C-terminus: Translation initiation factor IF-2 (705 aa).

The tract at residues 40-124 is disordered; sequence DDQIKALDKK…QPAAPKEIPS (85 aa). A compositionally biased stretch (basic and acidic residues) spans 41 to 58; sequence DQIKALDKKFKKEQKNDN. The segment covering 59 to 77 has biased composition (low complexity); sequence KQSTQNNHQKSNNQNQNKG. The segment covering 94-108 has biased composition (basic residues); it reads KGNKKNNRNNKKNNK. Positions 207 to 376 constitute a tr-type G domain; sequence ERPAVVTIMG…GLVAEVQELK (170 aa). The G1 stretch occupies residues 216-223; sequence GHVDHGKT. 216 to 223 lines the GTP pocket; that stretch reads GHVDHGKT. Residues 241-245 form a G2 region; it reads GITQH. Residues 262–265 are G3; sequence DTPG. Residues 262–266 and 316–319 each bind GTP; these read DTPGH and NKID. A G4 region spans residues 316–319; sequence NKID. Residues 352–354 form a G5 region; that stretch reads SAL.

Belongs to the TRAFAC class translation factor GTPase superfamily. Classic translation factor GTPase family. IF-2 subfamily.

It is found in the cytoplasm. One of the essential components for the initiation of protein synthesis. Protects formylmethionyl-tRNA from spontaneous hydrolysis and promotes its binding to the 30S ribosomal subunits. Also involved in the hydrolysis of GTP during the formation of the 70S ribosomal complex. The polypeptide is Translation initiation factor IF-2 (Staphylococcus aureus (strain MSSA476)).